We begin with the raw amino-acid sequence, 121 residues long: uncharacterized protein (121 aa).

Over residues 12-24 (EEGGASAAAPDAS) the composition is skewed to low complexity. 2 disordered regions span residues 12 to 63 (EEGG…RLEP) and 101 to 121 (KKLA…SPVV). Residues 26–35 (KSKKGARPCF) show a composition bias toward basic residues. The span at 40 to 49 (QAGSCMTGRQ) shows a compositional bias: polar residues. The segment covering 112–121 (GSQKERSPVV) has biased composition (basic and acidic residues).

This is an uncharacterized protein from Homo sapiens (Human).